The sequence spans 325 residues: Tetraacyldisaccharide 4'-kinase (325 aa).

55–62 contacts ATP; that stretch reads TAGGNGKT.

The protein belongs to the LpxK family.

It catalyses the reaction a lipid A disaccharide + ATP = a lipid IVA + ADP + H(+). Its pathway is glycolipid biosynthesis; lipid IV(A) biosynthesis; lipid IV(A) from (3R)-3-hydroxytetradecanoyl-[acyl-carrier-protein] and UDP-N-acetyl-alpha-D-glucosamine: step 6/6. In terms of biological role, transfers the gamma-phosphate of ATP to the 4'-position of a tetraacyldisaccharide 1-phosphate intermediate (termed DS-1-P) to form tetraacyldisaccharide 1,4'-bis-phosphate (lipid IVA). The chain is Tetraacyldisaccharide 4'-kinase from Salmonella heidelberg (strain SL476).